The following is a 438-amino-acid chain: Glyceraldehyde-3-phosphate dehydrogenase B, chloroplastic (438 aa).

A chloroplast-targeting transit peptide spans 1–53 (CLSKKFEVAEFAGLRSSGCVTFSNKESSFFDVVSAQLTPKTTRSTPVKGETVA). Residues 64 to 65 (RI), D88, and R133 contribute to the NADP(+) site. D-glyceraldehyde 3-phosphate contacts are provided by residues 207–209 (SCT), T238, R253, 266–267 (TG), and R289. C208 acts as the Nucleophile in catalysis. Residue N372 coordinates NADP(+).

Belongs to the glyceraldehyde-3-phosphate dehydrogenase family. Tetramer of either four A chains (GAPDH 2) or two A and two B chains (GAPDH 1).

The protein localises to the plastid. Its subcellular location is the chloroplast. The enzyme catalyses D-glyceraldehyde 3-phosphate + phosphate + NADP(+) = (2R)-3-phospho-glyceroyl phosphate + NADPH + H(+). Its pathway is carbohydrate biosynthesis; Calvin cycle. This chain is Glyceraldehyde-3-phosphate dehydrogenase B, chloroplastic (GAPB), found in Nicotiana tabacum (Common tobacco).